Consider the following 247-residue polypeptide: Protein GrpE (247 aa).

Disordered stretches follow at residues 1-64 (MNDE…QALD) and 214-247 (SMGP…EKSD). Composition is skewed to polar residues over residues 30–39 (DEPSLSNVAE), 49–63 (DVTS…SQAL), and 228–241 (TEQS…TDQQ).

It belongs to the GrpE family. As to quaternary structure, homodimer.

The protein resides in the cytoplasm. Participates actively in the response to hyperosmotic and heat shock by preventing the aggregation of stress-denatured proteins, in association with DnaK and GrpE. It is the nucleotide exchange factor for DnaK and may function as a thermosensor. Unfolded proteins bind initially to DnaJ; upon interaction with the DnaJ-bound protein, DnaK hydrolyzes its bound ATP, resulting in the formation of a stable complex. GrpE releases ADP from DnaK; ATP binding to DnaK triggers the release of the substrate protein, thus completing the reaction cycle. Several rounds of ATP-dependent interactions between DnaJ, DnaK and GrpE are required for fully efficient folding. This is Protein GrpE from Prochlorococcus marinus (strain MIT 9211).